The primary structure comprises 152 residues: Small ribosomal subunit protein uS8m (152 aa).

It belongs to the universal ribosomal protein uS8 family.

Its subcellular location is the mitochondrion. The protein is Small ribosomal subunit protein uS8m (mrps8) of Dictyostelium discoideum (Social amoeba).